Reading from the N-terminus, the 270-residue chain is UPF0246 protein PsycPRwf_0637 (270 aa).

Belongs to the UPF0246 family.

This Psychrobacter sp. (strain PRwf-1) protein is UPF0246 protein PsycPRwf_0637.